Consider the following 540-residue polypeptide: MAAKDVKFGNDARVKMLRGVNVLADAVKVTLGPKGRNVVLDKSFGAPTITKDGVSVAREIELEDKFENMGAQMVKEVASKANDAAGDGTTTATVLAQSIITEGLKAVAAGMNPMDLKRGIDKAVVAAVEELKKLSVPCSDSKAIAQVGTISANSDETVGKLIAEAMEKVGKEGVITVEEGTGLQDELDVVEGMQFDRGYLSPYFINKPETGSVELESPFILLADKKISNIRELLPVLEAVAKAGKPLLIVAEDVEGEALATLVVNTMRGIVKVAAVKAPGFGDRRKAMLQDIATLTAGTVISEEIGLELEKATLEDLGQAKRVVINKDTTIIIDGVGDEATIQGRVTQIRQQIEEATSDYDREKLQERVAKLAGGVAVIKVGAATEVEMKEKKARVEDALHATRAAVEEGVVAGGGVALIRVAGKIAGLKGDNEDQNVGIKVALRAMESPLRQIVINAGEEASVIANNVKAGEGSYGYNAYSEEYGDMIAMGILDPTKVTRSALQYAASVAGLMITTECMVTDLPKADAPDLXGAGGMGG.

ATP-binding positions include 30–33 (TLGP), K51, 87–91 (DGTTT), G415, and D495.

The protein belongs to the chaperonin (HSP60) family. As to quaternary structure, forms a cylinder of 14 subunits composed of two heptameric rings stacked back-to-back. Interacts with the co-chaperonin GroES.

Its subcellular location is the cytoplasm. It carries out the reaction ATP + H2O + a folded polypeptide = ADP + phosphate + an unfolded polypeptide.. Functionally, together with its co-chaperonin GroES, plays an essential role in assisting protein folding. The GroEL-GroES system forms a nano-cage that allows encapsulation of the non-native substrate proteins and provides a physical environment optimized to promote and accelerate protein folding. The chain is Chaperonin GroEL from Serratia ficaria.